Consider the following 354-residue polypeptide: UDP-N-acetylglucosamine--N-acetylmuramyl-(pentapeptide) pyrophosphoryl-undecaprenol N-acetylglucosamine transferase (354 aa).

UDP-N-acetyl-alpha-D-glucosamine is bound by residues T15 to G17, N127, R163, S191, I244, A263 to E268, and Q288.

It belongs to the glycosyltransferase 28 family. MurG subfamily.

The protein localises to the cell inner membrane. The catalysed reaction is di-trans,octa-cis-undecaprenyl diphospho-N-acetyl-alpha-D-muramoyl-L-alanyl-D-glutamyl-meso-2,6-diaminopimeloyl-D-alanyl-D-alanine + UDP-N-acetyl-alpha-D-glucosamine = di-trans,octa-cis-undecaprenyl diphospho-[N-acetyl-alpha-D-glucosaminyl-(1-&gt;4)]-N-acetyl-alpha-D-muramoyl-L-alanyl-D-glutamyl-meso-2,6-diaminopimeloyl-D-alanyl-D-alanine + UDP + H(+). The protein operates within cell wall biogenesis; peptidoglycan biosynthesis. In terms of biological role, cell wall formation. Catalyzes the transfer of a GlcNAc subunit on undecaprenyl-pyrophosphoryl-MurNAc-pentapeptide (lipid intermediate I) to form undecaprenyl-pyrophosphoryl-MurNAc-(pentapeptide)GlcNAc (lipid intermediate II). The sequence is that of UDP-N-acetylglucosamine--N-acetylmuramyl-(pentapeptide) pyrophosphoryl-undecaprenol N-acetylglucosamine transferase from Aliivibrio fischeri (strain ATCC 700601 / ES114) (Vibrio fischeri).